The chain runs to 379 residues: Cinnamyl alcohol dehydrogenase 7 (379 aa).

A compositionally biased stretch (low complexity) spans 1 to 13; sequence MAPTTTATAAAEQ. A disordered region spans residues 1–21; that stretch reads MAPTTTATAAAEQAPPPQHTR. Position 60 (Cys60) interacts with Zn(2+). An NADP(+)-binding site is contributed by Ser62. Positions 82, 83, 113, 116, 119, 127, and 185 each coordinate Zn(2+). NADP(+)-binding positions include Thr189, 210-215, 233-238, Thr273, Gly297, and 320-322; these read GLGGLG, STSPVK, and SCM.

Belongs to the zinc-containing alcohol dehydrogenase family. In terms of assembly, homodimer. It depends on Zn(2+) as a cofactor. Expressed in roots, first internodes and panicles. Expressed in the vascular bundles and sclerenchyma cells below the epidermis in leaves and stems.

It carries out the reaction (E)-cinnamyl alcohol + NADP(+) = (E)-cinnamaldehyde + NADPH + H(+). It catalyses the reaction (E)-coniferol + NADP(+) = (E)-coniferaldehyde + NADPH + H(+). The catalysed reaction is (E)-sinapyl alcohol + NADP(+) = (E)-sinapaldehyde + NADPH + H(+). The enzyme catalyses (E)-4-coumaroyl alcohol + NADP(+) = (E)-4-coumaraldehyde + NADPH + H(+). It carries out the reaction (E)-caffeyl alcohol + NADP(+) = (E)-caffeyl aldehyde + NADPH + H(+). It functions in the pathway aromatic compound metabolism; phenylpropanoid biosynthesis. Involved in lignin biosynthesis. May catalyze the final step specific for the production of lignin monomers, like coniferyl alcohol, sinapyl alcohol and 4-coumaryl alcohol. The chain is Cinnamyl alcohol dehydrogenase 7 from Oryza sativa subsp. japonica (Rice).